A 63-amino-acid polypeptide reads, in one-letter code: Large ribosomal subunit protein uL29 (63 aa).

Belongs to the universal ribosomal protein uL29 family.

In Listeria innocua serovar 6a (strain ATCC BAA-680 / CLIP 11262), this protein is Large ribosomal subunit protein uL29.